Here is a 387-residue protein sequence, read N- to C-terminus: Alkanesulfonate monooxygenase (387 aa).

This sequence belongs to the SsuD family.

It carries out the reaction an alkanesulfonate + FMNH2 + O2 = an aldehyde + FMN + sulfite + H2O + 2 H(+). Its function is as follows. Catalyzes the desulfonation of aliphatic sulfonates. The protein is Alkanesulfonate monooxygenase of Ralstonia pickettii (strain 12J).